A 35-amino-acid polypeptide reads, in one-letter code: Photosystem II reaction center protein M (35 aa).

The chain crosses the membrane as a helical span at residues 7 to 27; that stretch reads GFLASLLFVLVPSVFLIVLYI.

This sequence belongs to the PsbM family. PSII is composed of 1 copy each of membrane proteins PsbA, PsbB, PsbC, PsbD, PsbE, PsbF, PsbH, PsbI, PsbJ, PsbK, PsbL, PsbM, PsbT, PsbX, PsbY, PsbZ, Psb30/Ycf12, peripheral proteins PsbO, CyanoQ (PsbQ), PsbU, PsbV and a large number of cofactors. It forms dimeric complexes.

It localises to the cellular thylakoid membrane. One of the components of the core complex of photosystem II (PSII). PSII is a light-driven water:plastoquinone oxidoreductase that uses light energy to abstract electrons from H(2)O, generating O(2) and a proton gradient subsequently used for ATP formation. It consists of a core antenna complex that captures photons, and an electron transfer chain that converts photonic excitation into a charge separation. This subunit is found at the monomer-monomer interface. The chain is Photosystem II reaction center protein M from Synechococcus elongatus (strain ATCC 33912 / PCC 7942 / FACHB-805) (Anacystis nidulans R2).